Consider the following 77-residue polypeptide: Acyl carrier protein (77 aa).

Residues 1–76 enclose the Carrier domain; the sequence is MSIEERVKKI…SAIDYVAKAN (76 aa). Residue Ser36 is modified to O-(pantetheine 4'-phosphoryl)serine.

It belongs to the acyl carrier protein (ACP) family. Post-translationally, 4'-phosphopantetheine is transferred from CoA to a specific serine of apo-ACP by AcpS. This modification is essential for activity because fatty acids are bound in thioester linkage to the sulfhydryl of the prosthetic group.

Its subcellular location is the cytoplasm. Its pathway is lipid metabolism; fatty acid biosynthesis. In terms of biological role, carrier of the growing fatty acid chain in fatty acid biosynthesis. The protein is Acyl carrier protein of Haemophilus ducreyi (strain 35000HP / ATCC 700724).